Consider the following 248-residue polypeptide: MKSIVLLRHGESIWNKENRFTGWTDVDLTEKGVAEAYRAGNLLKEKGYVFNKAYTSYLKRAVKTLNCVLDRMDQDWIPVEKSWRLNEKHYGSLQGLNKSETAQKYGDEQVLIWRRSYDIAPLPLSEDDPRNPRFDIRYKDVPDKELPRTESLKDTVERILPYWKEVIFPTLRTADQILVAAHGNSLRGIIKYLKNISDEEIVHLNLPTAVPYVFEFDDDLKLVNDYFLGDPEEIKKLMEAVANQGKKK.

Substrate is bound by residues 8-15 (RHGESIWN), 21-22 (TG), arginine 60, 87-90 (EKHY), lysine 98, 114-115 (RR), and 183-184 (GN). Histidine 9 functions as the Tele-phosphohistidine intermediate in the catalytic mechanism. Glutamate 87 functions as the Proton donor/acceptor in the catalytic mechanism.

The protein belongs to the phosphoglycerate mutase family. BPG-dependent PGAM subfamily.

The enzyme catalyses (2R)-2-phosphoglycerate = (2R)-3-phosphoglycerate. It participates in carbohydrate degradation; glycolysis; pyruvate from D-glyceraldehyde 3-phosphate: step 3/5. Its function is as follows. Catalyzes the interconversion of 2-phosphoglycerate and 3-phosphoglycerate. The polypeptide is 2,3-bisphosphoglycerate-dependent phosphoglycerate mutase (Parabacteroides distasonis (strain ATCC 8503 / DSM 20701 / CIP 104284 / JCM 5825 / NCTC 11152)).